A 311-amino-acid polypeptide reads, in one-letter code: Glutaminase (311 aa).

7 residues coordinate substrate: Ser66, Asn116, Glu162, Asn169, Tyr193, Tyr245, and Val263.

It belongs to the glutaminase family. Homotetramer.

The catalysed reaction is L-glutamine + H2O = L-glutamate + NH4(+). The polypeptide is Glutaminase (Rhodopseudomonas palustris (strain ATCC BAA-98 / CGA009)).